The chain runs to 111 residues: UPF0342 protein gbs1446 (111 aa).

The protein belongs to the UPF0342 family.

This Streptococcus agalactiae serotype III (strain NEM316) protein is UPF0342 protein gbs1446.